Reading from the N-terminus, the 159-residue chain is uncharacterized protein (159 aa).

2 helical membrane-spanning segments follow: residues 17-37 (ALFI…TILV) and 40-60 (LLQF…FKKY).

Its subcellular location is the cell membrane. This is an uncharacterized protein from Borreliella burgdorferi (strain ATCC 35210 / DSM 4680 / CIP 102532 / B31) (Borrelia burgdorferi).